A 160-amino-acid chain; its full sequence is Small ribosomal subunit protein uS17z (160 aa).

This sequence belongs to the universal ribosomal protein uS17 family.

Its subcellular location is the cytoplasm. The sequence is that of Small ribosomal subunit protein uS17z (RPS11A) from Arabidopsis thaliana (Mouse-ear cress).